We begin with the raw amino-acid sequence, 183 residues long: ATP synthase subunit b, chloroplastic (183 aa).

Residues 33 to 51 traverse the membrane as a helical segment; the sequence is IINLSVVIGVVVSFGGDAL.

This sequence belongs to the ATPase B chain family. As to quaternary structure, F-type ATPases have 2 components, F(1) - the catalytic core - and F(0) - the membrane proton channel. F(1) has five subunits: alpha(3), beta(3), gamma(1), delta(1), epsilon(1). F(0) has four main subunits: a(1), b(1), b'(1) and c(10-14). The alpha and beta chains form an alternating ring which encloses part of the gamma chain. F(1) is attached to F(0) by a central stalk formed by the gamma and epsilon chains, while a peripheral stalk is formed by the delta, b and b' chains.

It localises to the plastid. Its subcellular location is the chloroplast thylakoid membrane. Its function is as follows. F(1)F(0) ATP synthase produces ATP from ADP in the presence of a proton or sodium gradient. F-type ATPases consist of two structural domains, F(1) containing the extramembraneous catalytic core and F(0) containing the membrane proton channel, linked together by a central stalk and a peripheral stalk. During catalysis, ATP synthesis in the catalytic domain of F(1) is coupled via a rotary mechanism of the central stalk subunits to proton translocation. In terms of biological role, component of the F(0) channel, it forms part of the peripheral stalk, linking F(1) to F(0). In Oltmannsiellopsis viridis (Marine flagellate), this protein is ATP synthase subunit b, chloroplastic.